A 358-amino-acid chain; its full sequence is Methylthioribose-1-phosphate isomerase (358 aa).

Residues 54–56 (RGA), R96, and Q205 contribute to the substrate site. D246 functions as the Proton donor in the catalytic mechanism. 256–257 (NK) serves as a coordination point for substrate.

It belongs to the eIF-2B alpha/beta/delta subunits family. MtnA subfamily.

It catalyses the reaction 5-(methylsulfanyl)-alpha-D-ribose 1-phosphate = 5-(methylsulfanyl)-D-ribulose 1-phosphate. Its pathway is amino-acid biosynthesis; L-methionine biosynthesis via salvage pathway; L-methionine from S-methyl-5-thio-alpha-D-ribose 1-phosphate: step 1/6. In terms of biological role, catalyzes the interconversion of methylthioribose-1-phosphate (MTR-1-P) into methylthioribulose-1-phosphate (MTRu-1-P). This Pseudomonas savastanoi pv. phaseolicola (strain 1448A / Race 6) (Pseudomonas syringae pv. phaseolicola (strain 1448A / Race 6)) protein is Methylthioribose-1-phosphate isomerase.